The sequence spans 122 residues: Large ribosomal subunit protein bL19 (122 aa).

The protein belongs to the bacterial ribosomal protein bL19 family.

This protein is located at the 30S-50S ribosomal subunit interface and may play a role in the structure and function of the aminoacyl-tRNA binding site. This Chlamydia felis (strain Fe/C-56) (Chlamydophila felis) protein is Large ribosomal subunit protein bL19.